Consider the following 285-residue polypeptide: UPF0354 protein SA1564 (285 aa).

It belongs to the UPF0354 family.

The chain is UPF0354 protein SA1564 from Staphylococcus aureus (strain N315).